The primary structure comprises 94 residues: Co-chaperonin GroES (94 aa).

The protein belongs to the GroES chaperonin family. As to quaternary structure, heptamer of 7 subunits arranged in a ring. Interacts with the chaperonin GroEL.

The protein localises to the cytoplasm. Functionally, together with the chaperonin GroEL, plays an essential role in assisting protein folding. The GroEL-GroES system forms a nano-cage that allows encapsulation of the non-native substrate proteins and provides a physical environment optimized to promote and accelerate protein folding. GroES binds to the apical surface of the GroEL ring, thereby capping the opening of the GroEL channel. This Alkaliphilus oremlandii (strain OhILAs) (Clostridium oremlandii (strain OhILAs)) protein is Co-chaperonin GroES.